The primary structure comprises 311 residues: Probable branched-chain-amino-acid aminotransferase (311 aa).

An N6-(pyridoxal phosphate)lysine modification is found at K160.

It belongs to the class-IV pyridoxal-phosphate-dependent aminotransferase family. Pyridoxal 5'-phosphate serves as cofactor.

It carries out the reaction L-leucine + 2-oxoglutarate = 4-methyl-2-oxopentanoate + L-glutamate. It catalyses the reaction L-isoleucine + 2-oxoglutarate = (S)-3-methyl-2-oxopentanoate + L-glutamate. The catalysed reaction is L-valine + 2-oxoglutarate = 3-methyl-2-oxobutanoate + L-glutamate. It participates in amino-acid biosynthesis; L-isoleucine biosynthesis; L-isoleucine from 2-oxobutanoate: step 4/4. The protein operates within amino-acid biosynthesis; L-leucine biosynthesis; L-leucine from 3-methyl-2-oxobutanoate: step 4/4. Its pathway is amino-acid biosynthesis; L-valine biosynthesis; L-valine from pyruvate: step 4/4. In terms of biological role, acts on leucine, isoleucine and valine. The chain is Probable branched-chain-amino-acid aminotransferase (ilvE) from Aquifex aeolicus (strain VF5).